Here is a 323-residue protein sequence, read N- to C-terminus: Palmitoyltransferase ZDHHC20-B (323 aa).

The Cytoplasmic segment spans residues 1–14; that stretch reads MAPTHVLRCCQRGL. The helical transmembrane segment at 15–35 threads the bilayer; it reads AWIPVIFIALVVCWSYYAYVV. Residues 36 to 41 are Lumenal-facing; that stretch reads ELCLLV. A helical membrane pass occupies residues 42–62; it reads YLVVFHLSFVMFVWSYWKTIF. The Cytoplasmic portion of the chain corresponds to 63-157; the sequence is TKPANPSKEF…NNCVGFSNYK (95 aa). The DHHC domain maps to 114 to 164; the sequence is RYCDRCQVIKPDRCHHCSACDMCVLKMDHHCPWVNNCVGFSNYKFFILFLT. Residue C144 is the S-palmitoyl cysteine intermediate of the active site. Residues 158–178 form a helical membrane-spanning segment; that stretch reads FFILFLTYSLVYCLFIAASVL. Topologically, residues 179–195 are lumenal; that stretch reads QYFIKFWTSDLPESHAK. A helical membrane pass occupies residues 196–219; the sequence is FHVLFLFFVAAMFCISILSLFTYH. Over 220 to 323 the chain is Cytoplasmic; sequence LWLVGKNRST…KQAKKKKTDE (104 aa).

The protein belongs to the DHHC palmitoyltransferase family.

The protein localises to the golgi apparatus membrane. Its subcellular location is the cell membrane. The protein resides in the cytoplasm. It localises to the perinuclear region. It is found in the endoplasmic reticulum membrane. The protein localises to the endoplasmic reticulum-Golgi intermediate compartment membrane. It carries out the reaction L-cysteinyl-[protein] + hexadecanoyl-CoA = S-hexadecanoyl-L-cysteinyl-[protein] + CoA. The enzyme catalyses L-cysteinyl-[protein] + tetradecanoyl-CoA = S-tetradecanoyl-L-cysteinyl-[protein] + CoA. It catalyses the reaction L-cysteinyl-[protein] + octadecanoyl-CoA = S-octadecanoyl-L-cysteinyl-[protein] + CoA. In terms of biological role, palmitoyltransferase that could catalyze the addition of palmitate onto various protein substrates. Catalyzes palmitoylation of Cys residues on protein substrates and has a preference for acyl-CoA with C16 fatty acid chains but may also utilize acyl-CoA with C14 and C18 fatty acid chains. The protein is Palmitoyltransferase ZDHHC20-B (zdhhc20b) of Danio rerio (Zebrafish).